Consider the following 220-residue polypeptide: Putative O-methyltransferase Mjls_4009 (220 aa).

Residues Val47, Glu69, 71-72 (GT), Ser77, Asp95, and Val96 contribute to the S-adenosyl-L-methionine site. Asp143 lines the substrate pocket. Position 145 (Asp145) interacts with S-adenosyl-L-methionine.

Belongs to the class I-like SAM-binding methyltransferase superfamily. Cation-dependent O-methyltransferase family.

The polypeptide is Putative O-methyltransferase Mjls_4009 (Mycobacterium sp. (strain JLS)).